We begin with the raw amino-acid sequence, 611 residues long: Leucine aminopeptidase (611 aa).

Residues 129-131 (QCQ) and 278-282 (GGMEN) contribute to the substrate site. Histidine 305 provides a ligand contact to Zn(2+). Catalysis depends on glutamate 306, which acts as the Proton acceptor. 2 residues coordinate Zn(2+): histidine 309 and glutamate 328. Tyrosine 393 (proton donor) is an active-site residue. 562–564 (RMK) lines the substrate pocket.

This sequence belongs to the peptidase M1 family. The cofactor is Zn(2+).

The protein localises to the cytoplasm. It carries out the reaction an epoxide + H2O = an ethanediol. In terms of biological role, aminopeptidase that preferentially cleaves di- and tripeptides. Also has low epoxide hydrolase activity (in vitro). Can hydrolyze the epoxide leukotriene LTA(4) but it forms preferentially 5,6-dihydroxy-7,9,11,14-eicosatetraenoic acid rather than the cytokine leukotriene B(4) as the product compared to the homologous mammalian enzyme (in vitro). The protein is Leucine aminopeptidase (LKHA4) of Oryza sativa subsp. japonica (Rice).